Here is a 289-residue protein sequence, read N- to C-terminus: E3 ubiquitin-protein ligase MARCHF5 (289 aa).

The RING-CH-type zinc finger occupies Val4–Val73. Cys12, Cys15, Cys31, Cys33, His41, Cys44, Cys63, and Cys66 together coordinate Zn(2+). Helical transmembrane passes span Phe97–Val117, Pro137–Ile157, Leu202–Gly222, and Thr236–Gln256.

The protein localises to the mitochondrion outer membrane. It is found in the endoplasmic reticulum membrane. It catalyses the reaction S-ubiquitinyl-[E2 ubiquitin-conjugating enzyme]-L-cysteine + [acceptor protein]-L-lysine = [E2 ubiquitin-conjugating enzyme]-L-cysteine + N(6)-ubiquitinyl-[acceptor protein]-L-lysine.. It participates in protein modification; protein ubiquitination. Functionally, mitochondrial E3 ubiquitin-protein ligase that plays a crucial role in the control of mitochondrial morphology by acting as a positive regulator of mitochondrial fission. May play a role in the prevention of cell senescence acting as a regulator of mitochondrial quality control. This chain is E3 ubiquitin-protein ligase MARCHF5 (marchf5), found in Danio rerio (Zebrafish).